Here is a 142-residue protein sequence, read N- to C-terminus: Large ribosomal subunit protein uL13 (142 aa).

It belongs to the universal ribosomal protein uL13 family. Part of the 50S ribosomal subunit.

Functionally, this protein is one of the early assembly proteins of the 50S ribosomal subunit, although it is not seen to bind rRNA by itself. It is important during the early stages of 50S assembly. The protein is Large ribosomal subunit protein uL13 of Shigella dysenteriae serotype 1 (strain Sd197).